The chain runs to 268 residues: Tryptophan synthase alpha chain (268 aa).

Active-site proton acceptor residues include Glu49 and Asp60.

This sequence belongs to the TrpA family. In terms of assembly, tetramer of two alpha and two beta chains.

The enzyme catalyses (1S,2R)-1-C-(indol-3-yl)glycerol 3-phosphate + L-serine = D-glyceraldehyde 3-phosphate + L-tryptophan + H2O. It functions in the pathway amino-acid biosynthesis; L-tryptophan biosynthesis; L-tryptophan from chorismate: step 5/5. Its function is as follows. The alpha subunit is responsible for the aldol cleavage of indoleglycerol phosphate to indole and glyceraldehyde 3-phosphate. In Escherichia coli O127:H6 (strain E2348/69 / EPEC), this protein is Tryptophan synthase alpha chain.